Reading from the N-terminus, the 154-residue chain is Interleukin-2 (154 aa).

The N-terminal stretch at 1-20 (MYRMQLLSCIALSLALITNS) is a signal peptide. O-linked (GalNAc...) threonine glycosylation is present at threonine 23. Residues cysteine 78 and cysteine 126 are joined by a disulfide bond.

It belongs to the IL-2 family.

The protein resides in the secreted. Cytokine produced by activated CD4-positive helper T-cells and to a lesser extend activated CD8-positive T-cells and natural killer (NK) cells that plays pivotal roles in the immune response and tolerance. Binds to a receptor complex composed of either the high-affinity trimeric IL-2R (IL2RA/CD25, IL2RB/CD122 and IL2RG/CD132) or the low-affinity dimeric IL-2R (IL2RB and IL2RG). Interaction with the receptor leads to oligomerization and conformation changes in the IL-2R subunits resulting in downstream signaling starting with phosphorylation of JAK1 and JAK3. In turn, JAK1 and JAK3 phosphorylate the receptor to form a docking site leading to the phosphorylation of several substrates including STAT5. This process leads to activation of several pathways including STAT, phosphoinositide-3-kinase/PI3K and mitogen-activated protein kinase/MAPK pathways. Functions as a T-cell growth factor and can increase NK-cell cytolytic activity as well. Promotes strong proliferation of activated B-cells and subsequently immunoglobulin production. Plays a pivotal role in regulating the adaptive immune system by controlling the survival and proliferation of regulatory T-cells, which are required for the maintenance of immune tolerance. Moreover, participates in the differentiation and homeostasis of effector T-cell subsets, including Th1, Th2, Th17 as well as memory CD8-positive T-cells. This chain is Interleukin-2 (IL2), found in Papio hamadryas (Hamadryas baboon).